The sequence spans 465 residues: Ribulose bisphosphate carboxylase large chain (465 aa).

Lys-4 bears the N6,N6,N6-trimethyllysine mark. Positions 113 and 163 each coordinate substrate. Residue Lys-165 is the Proton acceptor of the active site. Lys-167 provides a ligand contact to substrate. Mg(2+) is bound by residues Lys-191, Asp-193, and Glu-194. Lys-191 carries the post-translational modification N6-carboxylysine. The active-site Proton acceptor is the His-284. Substrate contacts are provided by Arg-285, His-317, and Ser-369.

This sequence belongs to the RuBisCO large chain family. Type I subfamily. Heterohexadecamer of 8 large chains and 8 small chains; disulfide-linked. The disulfide link is formed within the large subunit homodimers. Requires Mg(2+) as cofactor. In terms of processing, the disulfide bond which can form in the large chain dimeric partners within the hexadecamer appears to be associated with oxidative stress and protein turnover.

It is found in the plastid. It localises to the chloroplast. It catalyses the reaction 2 (2R)-3-phosphoglycerate + 2 H(+) = D-ribulose 1,5-bisphosphate + CO2 + H2O. The enzyme catalyses D-ribulose 1,5-bisphosphate + O2 = 2-phosphoglycolate + (2R)-3-phosphoglycerate + 2 H(+). RuBisCO catalyzes two reactions: the carboxylation of D-ribulose 1,5-bisphosphate, the primary event in carbon dioxide fixation, as well as the oxidative fragmentation of the pentose substrate in the photorespiration process. Both reactions occur simultaneously and in competition at the same active site. This is Ribulose bisphosphate carboxylase large chain from Eucommia ulmoides (Hardy rubber tree).